A 108-amino-acid polypeptide reads, in one-letter code: UPF0060 membrane protein DSY4157 (108 aa).

The next 4 helical transmembrane spans lie at 6–26 (ILFI…WLWL), 31–51 (PYWY…IPTL), 60–80 (VYAA…WGVD), and 86–106 (TYDW…LWAP).

The protein belongs to the UPF0060 family.

It is found in the cell membrane. The sequence is that of UPF0060 membrane protein DSY4157 from Desulfitobacterium hafniense (strain Y51).